A 481-amino-acid polypeptide reads, in one-letter code: 2-succinylbenzoate--CoA ligase (481 aa).

It belongs to the ATP-dependent AMP-binding enzyme family. MenE subfamily.

It catalyses the reaction 2-succinylbenzoate + ATP + CoA = 2-succinylbenzoyl-CoA + AMP + diphosphate. Its pathway is quinol/quinone metabolism; 1,4-dihydroxy-2-naphthoate biosynthesis; 1,4-dihydroxy-2-naphthoate from chorismate: step 5/7. The protein operates within quinol/quinone metabolism; menaquinone biosynthesis. Converts 2-succinylbenzoate (OSB) to 2-succinylbenzoyl-CoA (OSB-CoA). This Bacillus mycoides (strain KBAB4) (Bacillus weihenstephanensis) protein is 2-succinylbenzoate--CoA ligase.